The chain runs to 75 residues: Guanine nucleotide-binding protein G(I)/G(S)/G(O) subunit gamma-4 (75 aa).

A Cysteine methyl ester modification is found at C72. A lipid anchor (S-geranylgeranyl cysteine) is attached at C72. Residues 73–75 constitute a propeptide, removed in mature form; it reads TIL.

The protein belongs to the G protein gamma family. G proteins are composed of 3 units, alpha, beta and gamma. Interacts with beta-1 and beta-2, but not with beta-3. Interacts with KCNK1. Interacts (via C-terminus) with KCNK2/TREK-1 (via N-terminus); this interaction confers ion selectivity to Cl(-) and L-glutamate. Brain.

Its subcellular location is the cell membrane. Functionally, guanine nucleotide-binding proteins (G proteins) are involved as a modulator or transducer in various transmembrane signaling systems. The beta and gamma chains are required for the GTPase activity, for replacement of GDP by GTP, and for G protein-effector interaction. This is Guanine nucleotide-binding protein G(I)/G(S)/G(O) subunit gamma-4 (Gng4) from Mus musculus (Mouse).